The following is a 148-amino-acid chain: uncharacterized protein (148 aa).

One can recognise an HTH asnC-type domain in the interval 4-65 (LDKVDIQLVK…IPDLDKLGYM (62 aa)). A DNA-binding region (H-T-H motif) is located at residues 23–42 (YRELAELMNTTRQRIARRIT).

This is an uncharacterized protein from Pyrococcus abyssi (strain GE5 / Orsay).